The sequence spans 350 residues: Heat-inducible transcription repressor HrcA (350 aa).

It belongs to the HrcA family.

Negative regulator of class I heat shock genes (grpE-dnaK-dnaJ and groELS operons). Prevents heat-shock induction of these operons. The sequence is that of Heat-inducible transcription repressor HrcA from Xanthomonas campestris pv. campestris (strain ATCC 33913 / DSM 3586 / NCPPB 528 / LMG 568 / P 25).